We begin with the raw amino-acid sequence, 456 residues long: GTPase Der (456 aa).

2 consecutive EngA-type G domains span residues Leu2–Gly167 and Ala176–Lys351. GTP-binding positions include Gly8 to Ser15, Asp55 to Leu59, Asn118 to Glu121, Gly182 to Ser189, Asp229 to Ile233, and Asn294 to Asp297. Residues Ile352–Asn436 form the KH-like domain.

Belongs to the TRAFAC class TrmE-Era-EngA-EngB-Septin-like GTPase superfamily. EngA (Der) GTPase family. In terms of assembly, associates with the 50S ribosomal subunit.

In terms of biological role, GTPase that plays an essential role in the late steps of ribosome biogenesis. This chain is GTPase Der, found in Mycoplasmoides gallisepticum (strain R(low / passage 15 / clone 2)) (Mycoplasma gallisepticum).